The primary structure comprises 624 residues: E3 ubiquitin-protein ligase RLIM (624 aa).

An N-acetylmethionine modification is found at methionine 1. A compositionally biased stretch (basic and acidic residues) spans 1–11 (MENSDSNDKGS). Disordered stretches follow at residues 1 to 25 (MENSDSNDKGSGDQSAAQRRSQMDR), 72 to 251 (KEGP…SQTF), 257 to 276 (NETEGSSRTRHHVTLRQQIS), 291 to 363 (TRNA…RGGF), and 424 to 522 (SDSE…TFDE). Over residues 104–132 (SVRQTGNTTRSGQRGNQSWRAVSRTNPNS) the composition is skewed to polar residues. The segment covering 142 to 153 (NVNRNNGSQNSE) has biased composition (low complexity). At serine 164 the chain carries Phosphoserine. The segment covering 165 to 188 (GENVENNSQRQVENPRSESTSARP) has biased composition (polar residues). Residues serine 195, serine 228, serine 230, and serine 276 each carry the phosphoserine modification. Residues 214 to 229 (RSPDHRRTRARAERSR) are compositionally biased toward basic and acidic residues. Over residues 291–315 (TRNASQGAGSSDTAASGESTGSGQR) the composition is skewed to polar residues. A compositionally biased stretch (basic and acidic residues) spans 329–339 (RPGEYRQRDSI). The segment covering 340 to 356 (ASRTRSRSQTPNNTVTY) has biased composition (polar residues). Residues 445–454 (GRGGSGGGSS) show a composition bias toward gly residues. Positions 455–507 (SGSSSSSSSSSSSSSSSSSSSSPSSSSGGESSETSSDLFEGSNEGSSSSGSSG) are enriched in low complexity. The segment at 570–611 (CSVCITEYTEGNKLRKLPCSHEYHVHCIDRWLSENSTCPICR) adopts an RING-type zinc-finger fold. The PDZ-binding motif lies at 621–624 (ESVV).

This sequence belongs to the RNF12 family. As to quaternary structure, interacts with LIM/homeobox factors such as LHX3. Interacts with LDB1, LDB2 and SIN3A. Interacts with LIMK1. Interacts (via N-terminus) with TERF1. Interacts (via C-terminus) with ESR1. In terms of tissue distribution, expressed in many tissues.

Its subcellular location is the nucleus. It carries out the reaction S-ubiquitinyl-[E2 ubiquitin-conjugating enzyme]-L-cysteine + [acceptor protein]-L-lysine = [E2 ubiquitin-conjugating enzyme]-L-cysteine + N(6)-ubiquitinyl-[acceptor protein]-L-lysine.. Its pathway is protein modification; protein ubiquitination. E3 ubiquitin-protein ligase. Acts as a negative coregulator for LIM homeodomain transcription factors by mediating the ubiquitination and subsequent degradation of LIM cofactors LDB1 and LDB2 and by mediating the recruitment the SIN3a/histone deacetylase corepressor complex. Ubiquitination and degradation of LIM cofactors LDB1 and LDB2 allows DNA-bound LIM homeodomain transcription factors to interact with other protein partners such as RLIM. Plays a role in telomere length-mediated growth suppression by mediating the ubiquitination and degradation of TERF1. By targeting ZFP42 for degradation, acts as an activator of random inactivation of X chromosome in the embryo, a stochastic process in which one X chromosome is inactivated to minimize sex-related dosage differences of X-encoded genes in somatic cells of female placental mammals. This is E3 ubiquitin-protein ligase RLIM (RLIM) from Homo sapiens (Human).